We begin with the raw amino-acid sequence, 506 residues long: Nucleoside import ATP-binding protein NupA (506 aa).

2 consecutive ABC transporter domains span residues 7–242 and 259–503; these read IQMI…VGRS and LEIK…VGGN. Residue 39-46 coordinates ATP; that stretch reads GENGAGKS.

Belongs to the ABC transporter superfamily. In terms of assembly, the complex is composed of two ATP-binding proteins (NupA), two transmembrane proteins (NupB and NupC) and a solute-binding protein (BmpA).

The protein localises to the cell membrane. Part of an ABC transporter complex involved in the uptake of all common nucleosides. Responsible for energy coupling to the transport system. The sequence is that of Nucleoside import ATP-binding protein NupA from Lactococcus lactis subsp. cremoris (strain MG1363).